The following is a 252-amino-acid chain: Ribosomal RNA small subunit methyltransferase J (252 aa).

S-adenosyl-L-methionine contacts are provided by residues 105–106, 121–122, and Asp-175; these read RD and ER.

The protein belongs to the methyltransferase superfamily. RsmJ family.

Its subcellular location is the cytoplasm. It catalyses the reaction guanosine(1516) in 16S rRNA + S-adenosyl-L-methionine = N(2)-methylguanosine(1516) in 16S rRNA + S-adenosyl-L-homocysteine + H(+). Its function is as follows. Specifically methylates the guanosine in position 1516 of 16S rRNA. The polypeptide is Ribosomal RNA small subunit methyltransferase J (Pasteurella multocida (strain Pm70)).